An 858-amino-acid chain; its full sequence is Zinc finger protein ZXDC (858 aa).

Disordered regions lie at residues 1 to 73 (MDLP…GGDS), 85 to 108 (DTHG…PAAA), and 142 to 175 (AAPS…GSPA). Residues 59–68 (APGPSPPPPE) are compositionally biased toward pro residues. A compositionally biased stretch (low complexity) spans 142 to 152 (AAPSLHPATTP). 10 consecutive C2H2-type zinc fingers follow at residues 176 to 200 (YRCP…LLTH), 209 to 233 (FKCP…LQSH), 239 to 263 (FSCP…MKGH), 269 to 291 (FKCE…QRSH), 298 to 322 (YKCD…NRAH), 329 to 353 (FSCS…LRSH), 359 to 383 (FICD…KRKH), 389 to 413 (FTCP…SITH), 419 to 443 (FECP…SKKH), and 452 to 477 (SRCP…VRQH). Positions 624-634 (DSPALTPSNNL) are enriched in polar residues. Residues 624–652 (DSPALTPSNNLTAPGTTPTSSDTTQETGS) form a disordered region. The span at 635–651 (TAPGTTPTSSDTTQETG) shows a compositional bias: low complexity. Lys-661 participates in a covalent cross-link: Glycyl lysine isopeptide (Lys-Gly) (interchain with G-Cter in SUMO). 2 disordered regions span residues 671–714 (DVVQ…LESG) and 727–751 (VKKK…KVKG). Residues 681–692 (GPSQSVLSSSTE) are compositionally biased toward polar residues.

The protein belongs to the ZXD family. Self-associates. Interacts with ZXDB and CIITA. Post-translationally, sumoylated at Lys-661 with SUMO1, SUMO2 and SUMO3; sumoylation enhances the activity of the transcriptional activation domain.

It is found in the nucleus. Functionally, cooperates with CIITA to promote transcription of MHC class I and MHC class II genes. The protein is Zinc finger protein ZXDC (Zxdc) of Mus musculus (Mouse).